Consider the following 316-residue polypeptide: Cyclin-dependent kinase inhibitor 1C (316 aa).

Residue Arg-107 is modified to Omega-N-methylarginine. Residues 124–153 (ESLDGLEEAPEQLPSVPVPAPASTPPPVPV) form a disordered region. Residues 139 to 153 (VPVPAPASTPPPVPV) are compositionally biased toward pro residues. A run of 9 repeats spans residues 156 to 159 (PAPA), 160 to 163 (PAPA), 180 to 183 (PAPA), 184 to 187 (PAPA), 188 to 191 (PAPA), 198 to 201 (PAPA), 202 to 205 (PAPA), 206 to 209 (PAPA), and 210 to 213 (PAPA). The 9 X 4 AA repeats of P-A-P-A stretch occupies residues 156–213 (PAPAPAPAPVAAPVAAPVAVAVLAPAPAPAPAPAPAPAPVAAPAPAPAPAPAPAPAPA). Over residues 181 to 217 (APAPAPAPAPAPAPVAAPAPAPAPAPAPAPAPAPAPD) the composition is skewed to pro residues. The segment at 181-260 (APAPAPAPAP…AAGTAAASAN (80 aa)) is disordered. Residues 223–233 (SAEQGANQGQR) show a composition bias toward polar residues. The segment covering 251-260 (AAGTAAASAN) has biased composition (low complexity). Ser-268 is subject to Phosphoserine. A Nuclear localization signal motif is present at residues 278 to 281 (KRKR). A disordered region spans residues 278 to 316 (KRKRSAPEKSSGDVPAPCPSPSAAPGVGSVEQTPRKRLR).

Belongs to the CDI family. As to quaternary structure, interacts with PCNA. In terms of tissue distribution, expressed in the heart, brain, lung, skeletal muscle, kidney, pancreas and testis. Expressed in the eye. High levels are seen in the placenta while low levels are seen in the liver.

It is found in the nucleus. Potent tight-binding inhibitor of several G1 cyclin/CDK complexes (cyclin E-CDK2, cyclin D2-CDK4, and cyclin A-CDK2) and, to lesser extent, of the mitotic cyclin B-CDC2. Negative regulator of cell proliferation. May play a role in maintenance of the non-proliferative state throughout life. This is Cyclin-dependent kinase inhibitor 1C (CDKN1C) from Homo sapiens (Human).